The following is a 252-amino-acid chain: Probable transcriptional regulatory protein Moth_1704 (252 aa).

The protein belongs to the TACO1 family.

The protein resides in the cytoplasm. The sequence is that of Probable transcriptional regulatory protein Moth_1704 from Moorella thermoacetica (strain ATCC 39073 / JCM 9320).